We begin with the raw amino-acid sequence, 58 residues long: uncharacterized protein (58 aa).

It localises to the plastid. The protein localises to the chloroplast. This is an uncharacterized protein from Chlamydomonas reinhardtii (Chlamydomonas smithii).